A 92-amino-acid polypeptide reads, in one-letter code: Putative regulatory protein CKL_1364 (92 aa).

It belongs to the RemA family.

The protein is Putative regulatory protein CKL_1364 of Clostridium kluyveri (strain ATCC 8527 / DSM 555 / NBRC 12016 / NCIMB 10680 / K1).